A 614-amino-acid chain; its full sequence is FAD-dependent monooxygenase terD (614 aa).

The N-terminal stretch at 1–23 is a signal peptide; the sequence is MSSKFDVVICGSGTAGLAAATWL. Residues 6–35, Q44, V137, and 239–241 each bind FAD; these read DVVI…ILES and RVY. N-linked (GlcNAc...) asparagine glycosylation occurs at N260. The FAD site is built by Y282 and D303. N317 is a glycosylation site (N-linked (GlcNAc...) asparagine). S319 provides a ligand contact to FAD. A glycan (N-linked (GlcNAc...) asparagine) is linked at N602.

This sequence belongs to the PheA/TfdB FAD monooxygenase family. The cofactor is FAD.

It participates in secondary metabolite biosynthesis. In terms of biological role, FAD-dependent monooxygenase; part of the gene cluster that mediates the biosynthesis of terrein, a fungal metabolite with ecological, antimicrobial, antiproliferative, and antioxidative activities. The first step in the pathway is performed by the polyketide synthase terA that produces 4-hydroxy-6-methylpyranon (4-HMP), orsellinic acid (OA), and 2,3-dehydro-6-hydroxymellein (2,3-dehydro-6-HM) by condensing acetyl-CoA with two, three, or four malonyl-CoA units, respectively. 4-HMP and OA are not pathway intermediates, but are rather shunt or side products. 2,3-dehydro-6-HM is further converted to 6-hydroxymellein (6-HM) by the 6-hydroxymellein synthase terB. The monooxygenases terC and terD, the multicopper oxidase terE and the Kelch-like protein terF are then involved in the transformation of 6-HM to terrein. Even if they are co-regulated with the other terrein cluster genes, terH and terI seem to be dispensable for terrein production; whereas one or both of the 2 transporters terG and terJ are probably required for efficient secretion of metabolites. This is FAD-dependent monooxygenase terD from Aspergillus terreus (strain NIH 2624 / FGSC A1156).